The chain runs to 1046 residues: SWI/SNF-related matrix-associated actin-dependent regulator of chromatin subfamily A member 1 (1046 aa).

A disordered region spans residues 27-61 (EQPGPSTFKEEGAAAAATEGTTATEKGEKKEKITS). Residues 39–50 (AAAAATEGTTAT) are compositionally biased toward low complexity. Ser-120 and Ser-123 each carry phosphoserine. The Helicase ATP-binding domain occupies 199 to 364 (ISLYENGVNG…WALLNFLLPD (166 aa)). Residue 212-219 (DEMGLGKT) participates in ATP binding. Residues 315-318 (DEAH) carry the DEAH box motif. The 152-residue stretch at 494–645 (ALDKLLARIK…SIVIQQGRLI (152 aa)) folds into the Helicase C-terminal domain. Residues Lys-654, Lys-720, and Lys-742 each participate in a glycyl lysine isopeptide (Lys-Gly) (interchain with G-Cter in SUMO2) cross-link. A disordered region spans residues 819–840 (AQREEQKKIDGAEPLTPQETEE). The segment covering 820-829 (QREEQKKIDG) has biased composition (basic and acidic residues). One can recognise an SANT 1 domain in the interval 847–899 (QGFTNWTKRDFNQFIKANEKYGRDDIDNIAREVEGKSPEEVMEYSAVFWERCN). Tyr-946 bears the Phosphotyrosine mark. The region spanning 950–1014 (KGKNYTEEED…QRRCNTLISL (65 aa)) is the SANT 2 domain. Residues 1003–1037 (EFQRRCNTLISLIEKENMEIEERERAEKKKRATKT) adopt a coiled-coil conformation. Residues 1025–1046 (RERAEKKKRATKTPMVKFSAFS) are disordered.

This sequence belongs to the SNF2/RAD54 helicase family. ISWI subfamily. As to quaternary structure, may form homodimers. Component of the ACF-1 ISWI chromatin remodeling complex at least composed of SMARCA1 and BAZ1A, which regulates the spacing of histone octamers on the DNA template to facilitate access to DNA. Within the complex interacts with BAZ1A; the interaction is direct. Component of the WICH-1 ISWI chromatin remodeling complex at least composed of SMARCA1 and BAZ1B/WSTF. Within the complex interacts with BAZ1B/WSTF. Component of the NoRC-1 ISWI chromatin remodeling complex at least composed of SMARCA1 and BAZ2A/TIP5. Within the complex interacts with BAZ2A/TIP5. Component of the BRF-1 ISWI chromatin remodeling complex at least composed of SMARCA1 and BAZ2B. Within the complex interacts with BAZ2B. Component of the NURF-1 ISWI chromatin remodeling complex (also called the nucleosome-remodeling factor (NURF) complex) at least composed of SMARCA1, BPTF, RBBP4 and RBBP7. Within the complex interacts with BPTF. Within the complex interacts with RBBP4 and RBBP7. Component of the CERF-1 ISWI chromatin remodeling complex (also called the CECR2-containing-remodeling factor (CERF) complex) at least composed of CECR2 and SMARCA1. LUZP1 is detected as part of the CERF-1 complex in embryonic stem cells where it is involved in complex stabilization but is not detected in the complex in the testis. Component of the RSF-1 ISWI chromatin remodeling complex at least composed of SMARCA1 and RSF1. Within the complex interacts with RSF1. Interacts with PRLR. Interacts with ERCC6. Predominantly expressed in cortex, cerebellum, ovaries, testes, uterus and placenta.

The protein localises to the nucleus. It catalyses the reaction ATP + H2O = ADP + phosphate + H(+). ATPase that possesses intrinsic ATP-dependent chromatin-remodeling activity. ATPase activity is substrate-dependent, and is increased when nucleosomes are the substrate, but is also catalytically active when DNA alone is the substrate. Catalytic subunit of ISWI chromatin-remodeling complexes, which form ordered nucleosome arrays on chromatin and facilitate access to DNA during DNA-templated processes such as DNA replication, transcription, and repair. Within the ISWI chromatin-remodeling complexes, slides edge- and center-positioned histone octamers away from their original location on the DNA template. Catalytic activity and histone octamer sliding propensity is regulated and determined by components of the ISWI chromatin-remodeling complexes. The BAZ1A-, BAZ1B-, BAZ2A- and BAZ2B-containing ISWI chromatin-remodeling complexes regulate the spacing of nucleosomes along the chromatin and have the ability to slide mononucleosomes to the center of a DNA template. The CECR2- and RSF1-containing ISWI chromatin-remodeling complexes do not have the ability to slide mononucleosomes to the center of a DNA template. Within the NURF-1 and CERF-1 ISWI chromatin remodeling complexes, nucleosomes are the preferred substrate for its ATPase activity. Within the NURF-1 ISWI chromatin-remodeling complex, binds to the promoters of En1 and En2 to positively regulate their expression and promote brain development. May promote neurite outgrowth. May be involved in the development of luteal cells. Facilitates nucleosome assembly during DNA replication, ensuring replication fork progression and genomic stability by preventing replication stress and nascent DNA gaps. The sequence is that of SWI/SNF-related matrix-associated actin-dependent regulator of chromatin subfamily A member 1 (Smarca1) from Mus musculus (Mouse).